Here is a 695-residue protein sequence, read N- to C-terminus: Probable glucan endo-1,3-beta-glucosidase btgC (695 aa).

Disordered regions lie at residues Met-1–Gly-53, Arg-117–Asn-140, Gly-175–Ala-258, and Glu-286–Ser-314. Over Met-1–Arg-317 the chain is Cytoplasmic. A compositionally biased stretch (polar residues) spans Pro-36–Gly-45. Polar residues predominate over residues His-188–Asn-198. Residues Asn-231 to Asp-241 show a composition bias toward acidic residues. Residues Gly-318 to Val-338 traverse the membrane as a helical; Signal-anchor for type II membrane protein segment. The Extracellular segment spans residues Gly-339 to Ala-695. The tract at residues Asp-346–Asp-372 is disordered. Residues Asp-349 to Asp-366 show a composition bias toward low complexity. N-linked (GlcNAc...) asparagine glycans are attached at residues Asn-415, Asn-438, and Asn-466. Catalysis depends on Glu-498, which acts as the Proton donor. Glu-597 serves as the catalytic Nucleophile. The N-linked (GlcNAc...) asparagine glycan is linked to Asn-642.

It belongs to the glycosyl hydrolase 17 family.

It is found in the cell membrane. It carries out the reaction Hydrolysis of (1-&gt;3)-beta-D-glucosidic linkages in (1-&gt;3)-beta-D-glucans.. Its function is as follows. Glucanases play a role in cell expansion during growth, in cell-cell fusion during mating, and in spore release during sporulation. This enzyme may be involved in beta-glucan degradation. Active on laminarin and lichenan. This is Probable glucan endo-1,3-beta-glucosidase btgC (btgC) from Aspergillus clavatus (strain ATCC 1007 / CBS 513.65 / DSM 816 / NCTC 3887 / NRRL 1 / QM 1276 / 107).